The chain runs to 127 residues: MNLIQILEQEEIARLNKTIPSFAPGDTVIVNVNVVEGTRKRVQAYEGVVIAKRNRGLNSGFTVRKISSGEGVERTFQTYSPLIASIEVKRRGDVRRAKLYYLRERSGKSARIKEKLPSRVKAAAVAA.

It belongs to the bacterial ribosomal protein bL19 family.

In terms of biological role, this protein is located at the 30S-50S ribosomal subunit interface and may play a role in the structure and function of the aminoacyl-tRNA binding site. This is Large ribosomal subunit protein bL19 from Acidovorax ebreus (strain TPSY) (Diaphorobacter sp. (strain TPSY)).